The primary structure comprises 196 residues: Probable malonic semialdehyde reductase RutE (196 aa).

Belongs to the nitroreductase family. HadB/RutE subfamily. It depends on FMN as a cofactor.

It carries out the reaction 3-hydroxypropanoate + NADP(+) = 3-oxopropanoate + NADPH + H(+). May reduce toxic product malonic semialdehyde to 3-hydroxypropionic acid, which is excreted. The chain is Probable malonic semialdehyde reductase RutE from Escherichia coli O45:K1 (strain S88 / ExPEC).